Here is a 385-residue protein sequence, read N- to C-terminus: Alkanesulfonate monooxygenase (385 aa).

Belongs to the SsuD family.

The catalysed reaction is an alkanesulfonate + FMNH2 + O2 = an aldehyde + FMN + sulfite + H2O + 2 H(+). Its function is as follows. Catalyzes the desulfonation of aliphatic sulfonates. The chain is Alkanesulfonate monooxygenase from Burkholderia pseudomallei (strain 1710b).